Reading from the N-terminus, the 130-residue chain is MYSAVTQDIQITVLPEFIPERSNADQAMFFWAYTVEIANQSEKTVQLTARHWKITDGNGRLEEVQGPGVVGEQPILKPGETFRYTSGSNLTTPSGIMTGAYRMVDENGEEFDAQIPVFSLDSPFVRRVLN.

Positions 3–127 (SAVTQDIQIT…FSLDSPFVRR (125 aa)) constitute an ApaG domain.

In Methylocella silvestris (strain DSM 15510 / CIP 108128 / LMG 27833 / NCIMB 13906 / BL2), this protein is Protein ApaG.